A 272-amino-acid polypeptide reads, in one-letter code: Acidic leucine-rich nuclear phosphoprotein 32 family member B (272 aa).

LRR repeat units lie at residues proline 16–glutamate 40, asparagine 43–proline 64, lysine 65–alanine 84, and serine 89–lysine 110. The region spanning cysteine 123–glutamate 161 is the LRRCT domain. Positions aspartate 149–glutamate 254 are enriched in acidic residues. Residues aspartate 149 to aspartate 272 are disordered. A phosphoserine mark is found at serine 164 and serine 171. Residues serine 255–threonine 265 show a composition bias toward basic and acidic residues. A Nuclear localization signal motif is present at residues lysine 260 to arginine 263. Residue threonine 265 is modified to Phosphothreonine.

Belongs to the ANP32 family. In terms of assembly, interacts with histones H3 and H4. Interacts with KLF5; this interaction induces promoter region-specific histone incorporation and inhibition of histone acetylation by ANP32B. Post-translationally, some glutamate residues are glycylated by TTLL8. This modification occurs exclusively on glutamate residues and results in a glycine chain on the gamma-carboxyl group. Directly cleaved by caspase-3/CASP3. As to expression, predominantly expressed in brain. Expressed in the entire embryonic brain, whereas in the adult brain its expression is restricted to the subventricular zone where there are neural progenitor cells.

It localises to the nucleus. Functionally, multifunctional protein that is involved in the regulation of many processes including cell proliferation, apoptosis, cell cycle progression or transcription. Regulates the proliferation of neuronal stem cells, differentiation of leukemic cells and progression from G1 to S phase of the cell cycle. As negative regulator of caspase-3-dependent apoptosis, may act as an antagonist of ANP32A in regulating tissue homeostasis. Exhibits histone chaperone properties, able to recruit histones to certain promoters, thus regulating the transcription of specific genes. Also plays an essential role in the nucleocytoplasmic transport of specific mRNAs via the uncommon nuclear mRNA export receptor XPO1/CRM1. Participates in the regulation of adequate adaptive immune responses by acting on mRNA expression and cell proliferation. The protein is Acidic leucine-rich nuclear phosphoprotein 32 family member B (Anp32b) of Rattus norvegicus (Rat).